A 41-amino-acid chain; its full sequence is Large ribosomal subunit protein bL36 (41 aa).

The protein belongs to the bacterial ribosomal protein bL36 family.

This Rhizobium rhizogenes (strain K84 / ATCC BAA-868) (Agrobacterium radiobacter) protein is Large ribosomal subunit protein bL36.